Reading from the N-terminus, the 349-residue chain is Ureidoglycolate dehydrogenase (NAD(+)) (349 aa).

Catalysis depends on His-116, which acts as the Proton acceptor. Residues Ser-140, 174–176 (DMA), Lys-224, and 306–308 (GQD) each bind NAD(+).

Belongs to the LDH2/MDH2 oxidoreductase family. Homodimer.

It localises to the cytoplasm. The catalysed reaction is (S)-ureidoglycolate + NAD(+) = N-carbamoyl-2-oxoglycine + NADH + H(+). It participates in nitrogen metabolism; (S)-allantoin degradation; oxalurate from (S)-ureidoglycolate: step 1/1. Its function is as follows. AllD plays a pivotal role as a metabolic branch-point enzyme in nitrogen utilization via the assimilation of allantoin. It is able to utilize allantoin as a sole source of nitrogen under anaerobic conditions. Catalyzes the oxidation of ureidoglycolate to oxalurate. The chain is Ureidoglycolate dehydrogenase (NAD(+)) from Escherichia coli O157:H7.